The following is a 437-amino-acid chain: Enolase (437 aa).

Glutamine 162 is a (2R)-2-phosphoglycerate binding site. Catalysis depends on glutamate 204, which acts as the Proton donor. Residues aspartate 251, glutamate 297, and aspartate 324 each coordinate Mg(2+). Lysine 349, arginine 378, serine 379, and lysine 400 together coordinate (2R)-2-phosphoglycerate. Catalysis depends on lysine 349, which acts as the Proton acceptor.

It belongs to the enolase family. Mg(2+) is required as a cofactor.

The protein resides in the cytoplasm. The protein localises to the secreted. It is found in the cell surface. It catalyses the reaction (2R)-2-phosphoglycerate = phosphoenolpyruvate + H2O. It participates in carbohydrate degradation; glycolysis; pyruvate from D-glyceraldehyde 3-phosphate: step 4/5. Its function is as follows. Catalyzes the reversible conversion of 2-phosphoglycerate (2-PG) into phosphoenolpyruvate (PEP). It is essential for the degradation of carbohydrates via glycolysis. In Chlorobium limicola (strain DSM 245 / NBRC 103803 / 6330), this protein is Enolase.